The primary structure comprises 262 residues: Octanoyltransferase (262 aa).

The BPL/LPL catalytic domain maps to 41-232; it reads PQLPDGLLLL…SFCQVFGLQA (192 aa). Substrate is bound by residues 96–103, 163–165, and 176–178; these read RGGEVTYH, AIG, and GFA. Cys-194 functions as the Acyl-thioester intermediate in the catalytic mechanism.

It belongs to the LipB family.

It is found in the cytoplasm. It carries out the reaction octanoyl-[ACP] + L-lysyl-[protein] = N(6)-octanoyl-L-lysyl-[protein] + holo-[ACP] + H(+). Its pathway is protein modification; protein lipoylation via endogenous pathway; protein N(6)-(lipoyl)lysine from octanoyl-[acyl-carrier-protein]: step 1/2. In terms of biological role, catalyzes the transfer of endogenously produced octanoic acid from octanoyl-acyl-carrier-protein onto the lipoyl domains of lipoate-dependent enzymes. Lipoyl-ACP can also act as a substrate although octanoyl-ACP is likely to be the physiological substrate. This chain is Octanoyltransferase, found in Synechococcus sp. (strain JA-2-3B'a(2-13)) (Cyanobacteria bacterium Yellowstone B-Prime).